Consider the following 450-residue polypeptide: Growth/differentiation factor 7 (450 aa).

Residues 1–19 (MDLSAAAALCLWLLSACRP) form the signal peptide. The propeptide occupies 20 to 321 (RDGLEAAAVL…AVIGGRRRRR (302 aa)). An N-linked (GlcNAc...) asparagine glycan is attached at Asn-83. A disordered region spans residues 296 to 349 (ASEPLPDPGTGTASPRAVIGGRRRRRTALAGTRTAQGSGGGAGRGHGRRGRSRC). The span at 340–349 (GHGRRGRSRC) shows a compositional bias: basic residues. 3 cysteine pairs are disulfide-bonded: Cys-349–Cys-415, Cys-378–Cys-447, and Cys-382–Cys-449.

The protein belongs to the TGF-beta family. In terms of assembly, homodimer; disulfide-linked.

The protein localises to the secreted. In terms of biological role, may play an active role in the motor area of the primate neocortex. This chain is Growth/differentiation factor 7 (GDF7), found in Homo sapiens (Human).